The following is a 519-amino-acid chain: Exodeoxyribonuclease 7 large subunit (519 aa).

The segment at Val-500–Leu-519 is disordered.

The protein belongs to the XseA family. Heterooligomer composed of large and small subunits.

Its subcellular location is the cytoplasm. The enzyme catalyses Exonucleolytic cleavage in either 5'- to 3'- or 3'- to 5'-direction to yield nucleoside 5'-phosphates.. Its function is as follows. Bidirectionally degrades single-stranded DNA into large acid-insoluble oligonucleotides, which are then degraded further into small acid-soluble oligonucleotides. This Cereibacter sphaeroides (strain ATCC 17029 / ATH 2.4.9) (Rhodobacter sphaeroides) protein is Exodeoxyribonuclease 7 large subunit.